A 208-amino-acid chain; its full sequence is ATP-dependent Clp protease proteolytic subunit (208 aa).

Serine 107 acts as the Nucleophile in catalysis. Residue histidine 132 is part of the active site.

This sequence belongs to the peptidase S14 family. In terms of assembly, fourteen ClpP subunits assemble into 2 heptameric rings which stack back to back to give a disk-like structure with a central cavity, resembling the structure of eukaryotic proteasomes.

Its subcellular location is the cytoplasm. The catalysed reaction is Hydrolysis of proteins to small peptides in the presence of ATP and magnesium. alpha-casein is the usual test substrate. In the absence of ATP, only oligopeptides shorter than five residues are hydrolyzed (such as succinyl-Leu-Tyr-|-NHMec, and Leu-Tyr-Leu-|-Tyr-Trp, in which cleavage of the -Tyr-|-Leu- and -Tyr-|-Trp bonds also occurs).. Cleaves peptides in various proteins in a process that requires ATP hydrolysis. Has a chymotrypsin-like activity. Plays a major role in the degradation of misfolded proteins. The sequence is that of ATP-dependent Clp protease proteolytic subunit from Jannaschia sp. (strain CCS1).